The chain runs to 955 residues: UPF0182 protein syc2310_c (955 aa).

9 helical membrane-spanning segments follow: residues 12–32 (IAAIALGLSLLTRIHIETLWF), 45–65 (LAVQALLFSVVGIAITGLIGG), 85–105 (LQLGGLLTVLTLLWIALLALT), 141–161 (GSWPLGMGLLLGVGSLVLFLW), 163–183 (PWPLLIGLSSLTSLAIALLTS), 224–244 (FDLWIGLAFSFCAVLAVYYLA), 263–283 (HLVRLAIAIALFLAGHCWLAQ), 306–326 (LPLLQVWMILFGIAAIALFWQ), and 343–363 (AAIASVLIWVTLPAIVQQLVV).

The protein belongs to the UPF0182 family.

The protein resides in the cell membrane. This chain is UPF0182 protein syc2310_c, found in Synechococcus sp. (strain ATCC 27144 / PCC 6301 / SAUG 1402/1) (Anacystis nidulans).